A 377-amino-acid polypeptide reads, in one-letter code: NAC domain-containing protein 76 (377 aa).

The region spanning 10–159 (VPPGFRFHPT…GWVVCRAFKK (150 aa)) is the NAC domain. Residues 110–165 (IGMRKTLVFYKGRAPNGQKTDWIMHEYRLESDENAPPQEEGWVVCRAFKKKPMTGQ) mediate DNA binding. The interval 312-347 (GVSGFGGHHEEDNNKIGHYNNEESNNKGSVETASST) is disordered. Over residues 318–336 (GHHEEDNNKIGHYNNEESN) the composition is skewed to basic and acidic residues. Positions 337-347 (NKGSVETASST) are enriched in polar residues.

Belongs to the plant vascular related NAC-domain protein family. Interacts with NAC030/VND7. Detected in root protoxylem and metaxylem poles and in vessels of protoxylems, outermost metaxylems, inner metaxylems, shoots and hypocotyls. Expressed in roots, hypocotyls, cotyledons and leaves. Present in developing xylems. Specifically expressed in vessels but not in interfascicular fibers in stems.

The protein localises to the nucleus. Functionally, transcription activator that binds to the secondary wall NAC binding element (SNBE), 5'-(T/A)NN(C/T)(T/C/G)TNNNNNNNA(A/C)GN(A/C/T)(A/T)-3', in the promoter of target genes. Involved in xylem formation by promoting the expression of secondary wall-associated transcription factors and of genes involved in secondary wall biosynthesis and programmed cell death, genes driven by the secondary wall NAC binding element (SNBE). Triggers thickening of secondary walls. The polypeptide is NAC domain-containing protein 76 (Arabidopsis thaliana (Mouse-ear cress)).